Reading from the N-terminus, the 152-residue chain is MMKKIDVKILDPRVGQQFPLPTYATSGSAGLDLRACLDEAVALAPGATTLIPTGLAIHVADPSLAAVILPRSGLGHKHGIVLGNLVGLIDSDYQGQLMVSVWNRGQDSFTIEPGERIAQMVFVPVVQAEFNLVDDFDATDRGEGGFGHSGRK.

Substrate is bound by residues 71 to 73 (RSG), Asn-84, 88 to 90 (LID), and Met-98.

It belongs to the dUTPase family. Requires Mg(2+) as cofactor.

The catalysed reaction is dUTP + H2O = dUMP + diphosphate + H(+). The protein operates within pyrimidine metabolism; dUMP biosynthesis; dUMP from dCTP (dUTP route): step 2/2. Functionally, this enzyme is involved in nucleotide metabolism: it produces dUMP, the immediate precursor of thymidine nucleotides and it decreases the intracellular concentration of dUTP so that uracil cannot be incorporated into DNA. The protein is Deoxyuridine 5'-triphosphate nucleotidohydrolase of Enterobacter sp. (strain 638).